The sequence spans 554 residues: Perforin-1 (554 aa).

The signal sequence occupies residues 1-20 (MAAYLFLLGLFLLLPRPVPA). Disulfide bonds link Cys-22–Cys-75, Cys-30–Cys-72, and Cys-101–Cys-175. Positions 26–374 (TRSECKQNHK…HYVMSRARWR (349 aa)) constitute an MACPF domain. The beta stranded transmembrane segment at 128–148 (WRAGLDVNPKPEANVHVSVAG) threads the bilayer. An N-linked (GlcNAc...) asparagine glycan is attached at Asn-204. 4 disulfides stabilise this stretch: Cys-241-Cys-407, Cys-376-Cys-392, Cys-380-Cys-394, and Cys-396-Cys-406. Residues 256–278 (CLSVEAQVSIGAQASVSSEYKAC) form a beta stranded membrane-spanning segment. An EGF-like domain is found at 375 to 407 (DCNRPCRAGQHKSSRDSCQCVCQDSNVTNQDCC). Positions 395–513 (VCQDSNVTNQ…FHEVNCPLNH (119 aa)) constitute a C2 domain. N-linked (GlcNAc...) asparagine glycosylation is present at Asn-400. Ca(2+) is bound by residues Gly-428, Asp-429, Thr-432, Asp-435, Asn-454, Asp-483, Ala-484, Asp-485, Trp-488, Asp-489, Asp-490, and Asp-491. Disulfide bonds link Cys-496–Cys-509 and Cys-524–Cys-533. Asn-548 is a glycosylation site (N-linked (GlcNAc...) asparagine).

Belongs to the complement C6/C7/C8/C9 family. Monomer, as soluble protein. Homooligomer; homooligomerizes to form a pore-forming ring. Requires Ca(2+) as cofactor. In terms of processing, N-glycosylated. As to expression, detected in large granular lymphocytes and lymphokine-activated killer cells.

The protein resides in the cytolytic granule. Its subcellular location is the secreted. It localises to the cell membrane. It is found in the endosome lumen. Functionally, pore-forming protein that plays a key role in granzyme-mediated programmed cell death, and in defense against virus-infected or neoplastic cells. Can insert into the membrane of target cells in its calcium-bound form, oligomerize and form large pores. Promotes cytolysis and apoptosis of target cells by mediating the passage and uptake of cytotoxic granzymes. Facilitates the delivery of cationic cargo protein, while anionic or neural proteins are not delivered efficiently. Perforin pores allow the release of mature caspase-7 (CASP7) into the extracellular milieu. This is Perforin-1 (Prf1) from Rattus norvegicus (Rat).